Reading from the N-terminus, the 493-residue chain is Transmembrane and coiled-coil domain-containing protein 6 (493 aa).

Positions 15-84 (GVEELRRRRR…QRGTEEKERE (70 aa)) form a coiled coil. Helical transmembrane passes span 338 to 358 (VVAALFILLQFFFQKQPSLLP) and 386 to 406 (PLLQLLPVSNVVSVMVLTVLC).

It is found in the membrane. The chain is Transmembrane and coiled-coil domain-containing protein 6 (TMCO6) from Homo sapiens (Human).